Consider the following 103-residue polypeptide: MEAYDQKIAEEEAKAKEEEGVPDEEGWVKVTRRGRRPVLPRTEAASLRVLERERRKRSQKELLNYAWQHRESKMEHLAQLRKKFEEDKQRIELLRAQRKFRPY.

The span at Met1 to Glu19 shows a compositional bias: basic and acidic residues. The interval Met1 to Glu25 is disordered. Residues Glu71–Phe100 adopt a coiled-coil conformation.

This sequence belongs to the RRP7 family.

This is Putative ribosomal RNA-processing protein 7 homolog B from Homo sapiens (Human).